The sequence spans 364 residues: Methylenetetrahydrofolate--tRNA-(uracil-5-)-methyltransferase TrmFO (364 aa).

Position 11 to 16 (11 to 16 (GAGLAG)) interacts with FAD. Over residues 335–352 (SYLNQPCSSANDPTSSLL) the composition is skewed to polar residues. A disordered region spans residues 335–364 (SYLNQPCSSANDPTSSLLDRSPAQRDIPLQ).

The protein belongs to the MnmG family. TrmFO subfamily. FAD serves as cofactor.

The protein localises to the cytoplasm. The enzyme catalyses uridine(54) in tRNA + (6R)-5,10-methylene-5,6,7,8-tetrahydrofolate + NADH + H(+) = 5-methyluridine(54) in tRNA + (6S)-5,6,7,8-tetrahydrofolate + NAD(+). It catalyses the reaction uridine(54) in tRNA + (6R)-5,10-methylene-5,6,7,8-tetrahydrofolate + NADPH + H(+) = 5-methyluridine(54) in tRNA + (6S)-5,6,7,8-tetrahydrofolate + NADP(+). Its function is as follows. Catalyzes the folate-dependent formation of 5-methyl-uridine at position 54 (M-5-U54) in all tRNAs. The protein is Methylenetetrahydrofolate--tRNA-(uracil-5-)-methyltransferase TrmFO of Prochlorococcus marinus (strain MIT 9313).